The chain runs to 760 residues: Xaa-Pro dipeptidyl-peptidase (760 aa).

Catalysis depends on charge relay system residues Ser349, Asp469, and His499.

Belongs to the peptidase S15 family. Homodimer.

It localises to the cytoplasm. The catalysed reaction is Hydrolyzes Xaa-Pro-|- bonds to release unblocked, N-terminal dipeptides from substrates including Ala-Pro-|-p-nitroanilide and (sequentially) Tyr-Pro-|-Phe-Pro-|-Gly-Pro-|-Ile.. In terms of biological role, removes N-terminal dipeptides sequentially from polypeptides having unsubstituted N-termini provided that the penultimate residue is proline. The sequence is that of Xaa-Pro dipeptidyl-peptidase from Streptococcus pyogenes serotype M6 (strain ATCC BAA-946 / MGAS10394).